Consider the following 833-residue polypeptide: Probable serine/threonine-protein kinase DDB_G0277165 (833 aa).

Positions 9 to 262 constitute a Protein kinase domain; sequence FIIGKTLGQG…IKEIKEHPWF (254 aa). ATP is bound by residues 15–23 and Lys-38; that span reads LGQGTTGKV. The active-site Proton acceptor is the Asp-133. Residues 288–329 form the UBA domain; that stretch reads QIDEDIFRSLMALGVGTIDEVKQQLVSNQKSATLIYYRLLEE. The span at 338–351 shows a compositional bias: basic and acidic residues; sequence NKYGYKPKETRRNS. Disordered regions lie at residues 338–472, 528–626, and 764–799; these read NKYG…ISPS, QALQ…PIEI, and FINP…GGQN. Composition is skewed to low complexity over residues 365–432 and 441–459; these read NNNN…NNNN and SSSQ…QIPS. Residues 460–472 are compositionally biased toward polar residues; sequence NSTSQESMQISPS. The span at 528-589 shows a compositional bias: low complexity; that stretch reads QALQQHHQQQ…SSTSTSPQLS (62 aa). The segment covering 600–625 has biased composition (polar residues); the sequence is GSMTASTNPATSPTMSHRGKTSSPIE.

This sequence belongs to the protein kinase superfamily. CAMK Ser/Thr protein kinase family.

It carries out the reaction L-seryl-[protein] + ATP = O-phospho-L-seryl-[protein] + ADP + H(+). The enzyme catalyses L-threonyl-[protein] + ATP = O-phospho-L-threonyl-[protein] + ADP + H(+). The sequence is that of Probable serine/threonine-protein kinase DDB_G0277165 from Dictyostelium discoideum (Social amoeba).